We begin with the raw amino-acid sequence, 263 residues long: N-acetylgalactosamine permease IID component (263 aa).

In terms of domain architecture, PTS EIID spans 3–263; the sequence is SEISKKDITR…SIVCSAFGIL (261 aa). The next 6 membrane-spanning stretches (helical) occupy residues 61–81, 98–118, 131–151, 178–198, 215–235, and 243–263; these read LEFI…LISM, LFGP…LPIM, LLGP…RVGW, TILG…INVV, FFDK…MYYF, and PVLL…FGIL.

The protein resides in the cell inner membrane. Functionally, the phosphoenolpyruvate-dependent sugar phosphotransferase system (PTS), a major carbohydrate active -transport system, catalyzes the phosphorylation of incoming sugar substrates concomitant with their translocation across the cell membrane. This system is involved in N-acetylgalactosamine transport. This is N-acetylgalactosamine permease IID component (agaD) from Escherichia coli (strain K12).